We begin with the raw amino-acid sequence, 175 residues long: ATP synthase subunit delta (175 aa).

The protein belongs to the ATPase delta chain family. F-type ATPases have 2 components, F(1) - the catalytic core - and F(0) - the membrane proton channel. F(1) has five subunits: alpha(3), beta(3), gamma(1), delta(1), epsilon(1). F(0) has three main subunits: a(1), b(2) and c(10-14). The alpha and beta chains form an alternating ring which encloses part of the gamma chain. F(1) is attached to F(0) by a central stalk formed by the gamma and epsilon chains, while a peripheral stalk is formed by the delta and b chains.

The protein localises to the cell membrane. Its function is as follows. F(1)F(0) ATP synthase produces ATP from ADP in the presence of a proton or sodium gradient. F-type ATPases consist of two structural domains, F(1) containing the extramembraneous catalytic core and F(0) containing the membrane proton channel, linked together by a central stalk and a peripheral stalk. During catalysis, ATP synthesis in the catalytic domain of F(1) is coupled via a rotary mechanism of the central stalk subunits to proton translocation. Functionally, this protein is part of the stalk that links CF(0) to CF(1). It either transmits conformational changes from CF(0) to CF(1) or is implicated in proton conduction. This is ATP synthase subunit delta from Lactococcus lactis subsp. cremoris (strain MG1363).